Reading from the N-terminus, the 504-residue chain is Protein psiD (504 aa).

The signal sequence occupies residues Met1–Ser21. N-linked (GlcNAc...) asparagine glycans are attached at residues Asn87, Asn136, Asn236, Asn252, Asn290, and Asn373. The PA14 domain maps to Leu111–His251. Low complexity predominate over residues Thr417 to Pro430. Positions Thr417–Asp453 are disordered. Over residues Thr431–Asp453 the composition is skewed to pro residues. An N-linked (GlcNAc...) asparagine glycan is attached at Asn483.

This sequence belongs to the prespore-cell-inducing factor family.

The protein localises to the secreted. In Dictyostelium discoideum (Social amoeba), this protein is Protein psiD (psiD).